We begin with the raw amino-acid sequence, 440 residues long: Glycerol-3-phosphate dehydrogenase [NAD(+)], chloroplastic (440 aa).

Residues methionine 1 to alanine 47 constitute a chloroplast transit peptide. The interval glutamate 57–glutamate 76 is disordered. NAD(+) contacts are provided by residues glycine 114–glycine 119, phenylalanine 191, lysine 214, and alanine 248. A substrate-binding site is contributed by lysine 214. The active-site Proton acceptor is lysine 299. 2 residues coordinate NAD(+): arginine 363 and glutamate 389. Substrate is bound at residue arginine 363 to asparagine 364.

Belongs to the NAD-dependent glycerol-3-phosphate dehydrogenase family.

Its subcellular location is the plastid. The protein resides in the chloroplast. It catalyses the reaction sn-glycerol 3-phosphate + NAD(+) = dihydroxyacetone phosphate + NADH + H(+). It participates in membrane lipid metabolism; glycerophospholipid metabolism. Functionally, required to supply glycerol-3-phosphate in the chloroplast for the synthesis of glycerolipids. The polypeptide is Glycerol-3-phosphate dehydrogenase [NAD(+)], chloroplastic (Oryza sativa subsp. japonica (Rice)).